Here is a 215-residue protein sequence, read N- to C-terminus: Guanylate kinase (215 aa).

A Guanylate kinase-like domain is found at 9–187; it reads GTLYIVSAPS…ALDELSCLVH (179 aa). Position 16-23 (16-23) interacts with ATP; the sequence is APSGAGKT.

This sequence belongs to the guanylate kinase family.

Its subcellular location is the cytoplasm. The enzyme catalyses GMP + ATP = GDP + ADP. Functionally, essential for recycling GMP and indirectly, cGMP. The chain is Guanylate kinase from Chromohalobacter salexigens (strain ATCC BAA-138 / DSM 3043 / CIP 106854 / NCIMB 13768 / 1H11).